The following is a 334-amino-acid chain: N-chimaerin (334 aa).

Polar residues predominate over residues 1–10; sequence MPSKESWSGR. Positions 1–22 are disordered; that stretch reads MPSKESWSGRKTNRATVHKSKQ. Thr67 is modified (phosphothreonine). A Phorbol-ester/DAG-type zinc finger spans residues 80–130; the sequence is VHNFKVHTFRGPHWCEYCANFMWGLIAQGVKCADCGLNVHKQCSKMVPNDC. The Rho-GAP domain maps to 143–334; that stretch reads CDLTTLVKAR…LLIKNEDILF (192 aa). Position 215 is a phosphothreonine (Thr215).

Interacts with EPHA4; effector of EPHA4 in axon guidance linking EPHA4 activation to RAC1 regulation. In terms of processing, phosphorylated. Phosphorylation is EPHA4 kinase activity-dependent.

GTPase-activating protein for p21-rac and a phorbol ester receptor. Involved in the assembly of neuronal locomotor circuits as a direct effector of EPHA4 in axon guidance. The sequence is that of N-chimaerin (CHN1) from Bos taurus (Bovine).